Reading from the N-terminus, the 471-residue chain is MTDLPDSTRWQLWIVAFGFFMQSLDTTIVNTALPSMAQSLGESPLHMHMVIVSYVLTVAVMLPASGWLADKVGVRNIFFTAIVLFTLGSLFCALSGTLNELLLARALQGVGGAMMVPVGRLTVMKIVPREQYMAAMTFVTLPGQVGPLLGPALGGLLVEYASWHWIFLINIPVGIIGAIATLMLMPNYTMQTRRFDLSGFLLLAVGMAVLTLALDGSKGTGLSPLTIDGLVAVGVVALVLYLLHARNNNRALFSLKLFRTRTFSLGLAGSFAGRIGSGMLPFMTPVFLQIGLGFSPFHAGLMMIPMVLGSMGMKRIVVQVVNRFGYRRVLVATTLGLSLVTLLFMTTALLGWYYVLPFVLFLQGMVNSTRFSSMNTLTLKDLPDNLASSGNSLLSMIMQLSMSIGVTIAGLLLGLFGSQHVSVDSGTTQTVFMYTWLSMAFIIALPAFIFARVPNDTHQNVAISRRKRSAQ.

Over 1-11 (MTDLPDSTRWQ) the chain is Periplasmic. Residues 12-32 (LWIVAFGFFMQSLDTTIVNTA) traverse the membrane as a helical segment. At 33-48 (LPSMAQSLGESPLHMH) the chain is on the cytoplasmic side. A helical transmembrane segment spans residues 49–69 (MVIVSYVLTVAVMLPASGWLA). At 70-76 (DKVGVRN) the chain is on the periplasmic side. The helical transmembrane segment at 77 to 97 (IFFTAIVLFTLGSLFCALSGT) threads the bilayer. The Cytoplasmic portion of the chain corresponds to 98 to 101 (LNEL). The helical transmembrane segment at 102–124 (LLARALQGVGGAMMVPVGRLTVM) threads the bilayer. The Periplasmic portion of the chain corresponds to 125–137 (KIVPREQYMAAMT). Residues 138-158 (FVTLPGQVGPLLGPALGGLLV) traverse the membrane as a helical segment. The Cytoplasmic segment spans residues 159–164 (EYASWH). The chain crosses the membrane as a helical span at residues 165 to 185 (WIFLINIPVGIIGAIATLMLM). At 186–196 (PNYTMQTRRFD) the chain is on the periplasmic side. The helical transmembrane segment at 197–217 (LSGFLLLAVGMAVLTLALDGS) threads the bilayer. Over 218 to 224 (KGTGLSP) the chain is Cytoplasmic. A helical membrane pass occupies residues 225–245 (LTIDGLVAVGVVALVLYLLHA). Topologically, residues 246-262 (RNNNRALFSLKLFRTRT) are periplasmic. Residues 263–283 (FSLGLAGSFAGRIGSGMLPFM) traverse the membrane as a helical segment. Topologically, residues 284–285 (TP) are cytoplasmic. A helical transmembrane segment spans residues 286–306 (VFLQIGLGFSPFHAGLMMIPM). At 307-341 (VLGSMGMKRIVVQVVNRFGYRRVLVATTLGLSLVT) the chain is on the periplasmic side. A helical transmembrane segment spans residues 342–362 (LLFMTTALLGWYYVLPFVLFL). Residues 363–395 (QGMVNSTRFSSMNTLTLKDLPDNLASSGNSLLS) lie on the Cytoplasmic side of the membrane. Residues 396 to 416 (MIMQLSMSIGVTIAGLLLGLF) traverse the membrane as a helical segment. Residues 417–430 (GSQHVSVDSGTTQT) lie on the Periplasmic side of the membrane. The helical transmembrane segment at 431 to 451 (VFMYTWLSMAFIIALPAFIFA) threads the bilayer. The Cytoplasmic portion of the chain corresponds to 452–471 (RVPNDTHQNVAISRRKRSAQ).

This sequence belongs to the major facilitator superfamily. TCR/Tet family.

It localises to the cell inner membrane. In Escherichia coli O8 (strain IAI1), this protein is Putative multidrug resistance protein MdtD.